Consider the following 146-residue polypeptide: 3-dehydroquinate dehydratase (146 aa).

Residue Tyr-22 is the Proton acceptor of the active site. Substrate contacts are provided by Asn-73, His-79, and Asp-86. Residue His-99 is the Proton donor of the active site. Substrate is bound by residues 100–101 (LS) and Arg-110.

The protein belongs to the type-II 3-dehydroquinase family. As to quaternary structure, homododecamer.

The catalysed reaction is 3-dehydroquinate = 3-dehydroshikimate + H2O. The protein operates within metabolic intermediate biosynthesis; chorismate biosynthesis; chorismate from D-erythrose 4-phosphate and phosphoenolpyruvate: step 3/7. Functionally, catalyzes a trans-dehydration via an enolate intermediate. This Synechococcus sp. (strain CC9902) protein is 3-dehydroquinate dehydratase.